The sequence spans 894 residues: Cell wall-associated protease (894 aa).

A signal peptide spans 1 to 31 (MKRRKFSSVVAAVLIFALIFSLFSPGTKAAA). In terms of domain architecture, Peptidase S8 spans 422 to 729 (QWPLKNNGEN…YGRLNVMKAV (308 aa)). Catalysis depends on charge relay system residues Asp462, His497, and Ser650.

The protein belongs to the peptidase S8 family. In terms of processing, proteolytically cleaved to yield CWBP23 and CWBP52.

The protein localises to the secreted. It localises to the cell wall. Inhibited by PMSF. Functionally, CWBP52 is a serine-type protease that could be involved in proteoglycan peptide bridges. This Bacillus subtilis (strain 168) protein is Cell wall-associated protease (wprA).